The following is a 184-amino-acid chain: Succinate dehydrogenase cytochrome b560 subunit, mitochondrial (184 aa).

A helical membrane pass occupies residues Leu-65–Leu-94. The Mitochondrial intermembrane segment spans residues Pro-95–Val-114. Residues Thr-115–Phe-139 form a helical membrane-spanning segment. His-129 lines the heme pocket. The Mitochondrial matrix segment spans residues Asp-140–Asn-147. The chain crosses the membrane as a helical span at residues Ile-148 to Ile-169. Residues Val-170 to Asn-172 are Mitochondrial intermembrane-facing.

It belongs to the cytochrome b560 family. Component of complex II composed of four subunits: a flavoprotein (FP), iron-sulfur protein (IP), and a cytochrome b560 composed of two transmembrane proteins. Requires heme as cofactor.

Its subcellular location is the mitochondrion inner membrane. The protein operates within carbohydrate metabolism; tricarboxylic acid cycle. In terms of biological role, membrane-anchoring subunit of succinate dehydrogenase (SDH) that is involved in complex II of the mitochondrial electron transport chain and is responsible for transferring electrons from succinate to ubiquinone (coenzyme Q). Mediates resistance to enteropathogenic E.coli infection. This Caenorhabditis briggsae protein is Succinate dehydrogenase cytochrome b560 subunit, mitochondrial (mev-1).